Here is a 564-residue protein sequence, read N- to C-terminus: Histone acetyltransferase rtt109 (564 aa).

Residues phenylalanine 138, 157–159 (HVL), and tryptophan 167 contribute to the acetyl-CoA site. Aspartate 261 serves as the catalytic Proton donor/acceptor. Residue lysine 263 is modified to N6-acetyllysine; by autocatalysis. Disordered stretches follow at residues 355-420 (YDKV…NAFY) and 506-549 (RKKD…ESPG). The segment covering 366-377 (AVSVSTDSQSSD) has biased composition (low complexity). 2 stretches are compositionally biased toward polar residues: residues 394-417 (DPST…TDQN) and 512-521 (SQATTATSAQ). Over residues 529-544 (GTVSTAVTAEASTTGT) the composition is skewed to low complexity.

The protein belongs to the RTT109 family.

It is found in the nucleus. Its subcellular location is the vacuole. The enzyme catalyses L-lysyl-[protein] + acetyl-CoA = N(6)-acetyl-L-lysyl-[protein] + CoA + H(+). The catalysed reaction is L-lysyl-[histone] + acetyl-CoA = N(6)-acetyl-L-lysyl-[histone] + CoA + H(+). Its function is as follows. Histone chaperone-dependent acetylase that modifies 'Lys-56' of histone H3 (H3K56ac). Histone H3 'Lys-56' acetylation may be required for S-phase-linked DNA damage tolerance. Also acetylates 'Lys-9' of histone H3 (H3K9ac). Autoacetylates. The sequence is that of Histone acetyltransferase rtt109 from Aspergillus flavus.